The following is a 640-amino-acid chain: Threonine--tRNA ligase (640 aa).

The TGS domain maps to 1–60 (MKITFPDGAVKEFEPGVSTADIAASISPGLKKKALAGKLNGELLDLVTPIHEDGAIEIVT). The segment at 241–538 (DHRKLGKELE…LIEEYKGAFP (298 aa)) is catalytic. Positions 334, 385, and 515 each coordinate Zn(2+).

Belongs to the class-II aminoacyl-tRNA synthetase family. In terms of assembly, homodimer. Zn(2+) serves as cofactor.

The protein localises to the cytoplasm. The catalysed reaction is tRNA(Thr) + L-threonine + ATP = L-threonyl-tRNA(Thr) + AMP + diphosphate + H(+). Catalyzes the attachment of threonine to tRNA(Thr) in a two-step reaction: L-threonine is first activated by ATP to form Thr-AMP and then transferred to the acceptor end of tRNA(Thr). Also edits incorrectly charged L-seryl-tRNA(Thr). In Listeria monocytogenes serovar 1/2a (strain ATCC BAA-679 / EGD-e), this protein is Threonine--tRNA ligase.